Here is a 116-residue protein sequence, read N- to C-terminus: MGGRDQITNLGSEGETHPWGYSSPPYPLHTFFIPFLPSGFGGSGLGIPSDNEKHDLQDCVEVSRPEGPAPELPSSLCGWNKISSLCGLGFPSRDPKTWDLAMLLSPWVDFFELQLL.

Seems to be expressed only in testis.

The protein is Putative BPES syndrome breakpoint region protein (BPESC1) of Homo sapiens (Human).